A 2543-amino-acid polypeptide reads, in one-letter code: Highly reducing polyketide synthase PKS2 (2543 aa).

Residues 4-425 enclose the Ketosynthase family 3 (KS3) domain; that stretch reads EPRIAVIGLS…GSNSAILLEG (422 aa). Active-site for beta-ketoacyl synthase activity residues include cysteine 174, histidine 309, and histidine 349. Residues 573–902 form a malonyl-CoA:ACP transacylase (MAT) domain region; that stretch reads VFTGQGAQHA…TYLPTLFRGT (330 aa). The active-site For malonyltransferase activity is the serine 662. The tract at residues 969–1101 is N-terminal hotdog fold; sequence HPLLGRKISP…GQIEAEMTDM (133 aa). The PKS/mFAS DH domain occupies 969–1281; it reads HPLLGRKISP…FRNIGSAEEV (313 aa). Residues 969–1283 are dehydratase (DH) domain; that stretch reads HPLLGRKISP…NIGSAEEVID (315 aa). Histidine 1001 serves as the catalytic Proton acceptor; for dehydratase activity. Positions 1119–1281 are C-terminal hotdog fold; that stretch reads TGLKEHDINA…FRNIGSAEEV (163 aa). The active-site Proton donor; for dehydratase activity is aspartate 1188. Residues 1438–1631 form a methyltransferase (CMet) domain region; that stretch reads SKVLGYLTEY…LPSRYGTDKP (194 aa). The tract at residues 1847-2159 is enoylreductase (ER) domain; that stretch reads GSPDTIYFQR…SGEHMGKMVI (313 aa). The interval 2184 to 2359 is ketoreductase (KR) domain; sequence ATYLVAGGTR…YTVSIALPVV (176 aa). The Carrier domain maps to 2463–2540; that stretch reads DPLIGLTEAM…ALATEILSQR (78 aa). Serine 2500 carries the O-(pantetheine 4'-phosphoryl)serine modification.

The protein operates within secondary metabolite biosynthesis. Highly reducing polyketide synthase; part of the gene cluster that mediates the biosynthesis of phomenoic acid, a long chain aliphatic carboxylic acid that does not appear to be essential for pathogenicity but may play a role in allowing to outcompete other fungi in the environmental niche via its antifungal properties. The polyketide synthase produces the long methylated aliphatic carboxylic acid chain of phomenoic acid. The cluster-specific cytochrome P450 monooxygenase may then hydroxylate the methyl group of carbon 31. The putative dehydrogenase YogA, which has no obvious role in phomenoic acid biosynthesis, may further modify phomenoic acid to produce a compound not identified yet. The chain is Highly reducing polyketide synthase PKS2 from Leptosphaeria maculans (strain JN3 / isolate v23.1.3 / race Av1-4-5-6-7-8) (Blackleg fungus).